Reading from the N-terminus, the 470-residue chain is 3-isopropylmalate dehydratase large subunit (470 aa).

[4Fe-4S] cluster is bound by residues C351, C411, and C414.

This sequence belongs to the aconitase/IPM isomerase family. LeuC type 1 subfamily. In terms of assembly, heterodimer of LeuC and LeuD. [4Fe-4S] cluster is required as a cofactor.

The enzyme catalyses (2R,3S)-3-isopropylmalate = (2S)-2-isopropylmalate. It functions in the pathway amino-acid biosynthesis; L-leucine biosynthesis; L-leucine from 3-methyl-2-oxobutanoate: step 2/4. In terms of biological role, catalyzes the isomerization between 2-isopropylmalate and 3-isopropylmalate, via the formation of 2-isopropylmaleate. In Shewanella frigidimarina (strain NCIMB 400), this protein is 3-isopropylmalate dehydratase large subunit.